Reading from the N-terminus, the 269-residue chain is Shikimate dehydrogenase (NADP(+)) (269 aa).

Shikimate-binding positions include 22–24 (TLS) and T68. The active-site Proton acceptor is K72. Positions 93 and 104 each coordinate shikimate. NADP(+)-binding positions include 128 to 132 (GAGGA), 152 to 157 (NRTNLR), and F210. Y212 is a shikimate binding site. Residue G233 coordinates NADP(+).

It belongs to the shikimate dehydrogenase family. In terms of assembly, homodimer.

The enzyme catalyses shikimate + NADP(+) = 3-dehydroshikimate + NADPH + H(+). It functions in the pathway metabolic intermediate biosynthesis; chorismate biosynthesis; chorismate from D-erythrose 4-phosphate and phosphoenolpyruvate: step 4/7. Its function is as follows. Involved in the biosynthesis of the chorismate, which leads to the biosynthesis of aromatic amino acids. Catalyzes the reversible NADPH linked reduction of 3-dehydroshikimate (DHSA) to yield shikimate (SA). The polypeptide is Shikimate dehydrogenase (NADP(+)) (Saccharolobus islandicus (strain L.S.2.15 / Lassen #1) (Sulfolobus islandicus)).